Consider the following 501-residue polypeptide: Ribose import ATP-binding protein RbsA (501 aa).

ABC transporter domains are found at residues 6-242 and 253-495; these read LQLS…VGRK and KHGE…VGKK. Position 38-45 (38-45) interacts with ATP; it reads GENGAGKS.

Belongs to the ABC transporter superfamily. Ribose importer (TC 3.A.1.2.1) family. In terms of assembly, the complex is composed of an ATP-binding protein (RbsA), two transmembrane proteins (RbsC) and a solute-binding protein (RbsB).

Its subcellular location is the cell inner membrane. The enzyme catalyses D-ribose(out) + ATP + H2O = D-ribose(in) + ADP + phosphate + H(+). Its function is as follows. Part of the ABC transporter complex RbsABC involved in ribose import. Responsible for energy coupling to the transport system. The sequence is that of Ribose import ATP-binding protein RbsA from Vibrio parahaemolyticus serotype O3:K6 (strain RIMD 2210633).